Reading from the N-terminus, the 133-residue chain is Global transcriptional regulator Spx (133 aa).

A disulfide bridge connects residues Cys-10 and Cys-13.

The protein belongs to the ArsC family. Spx subfamily. Interacts with the C-terminal domain of the alpha subunit of the RNAP.

The protein localises to the cytoplasm. Functionally, global transcriptional regulator that plays a key role in stress response and exerts either positive or negative regulation of genes. Acts by interacting with the C-terminal domain of the alpha subunit of the RNA polymerase (RNAP). This interaction can enhance binding of RNAP to the promoter region of target genes and stimulate their transcription, or block interaction of RNAP with activator. The sequence is that of Global transcriptional regulator Spx from Streptococcus pneumoniae serotype 4 (strain ATCC BAA-334 / TIGR4).